The chain runs to 392 residues: Na(+)/H(+) antiporter NhaA 2 (392 aa).

11 consecutive transmembrane segments (helical) span residues 20 to 40 (FFAAEAAGGLILMAAALAALI), 63 to 83 (VEHWINDGLMAIFFMLVGLEI), 99 to 119 (ALPGFAALGGMVVPALIYVAF), 127 to 147 (IGGWAIPAATDIAFALGVLSL), 158 to 178 (IFLSALAILDDLGAVLIIALF), 181 to 201 (SDLSIPMLLAALGSIAVLVAL), 209 to 229 (LLPYLIVGALLWFFMLQSGIH), 265 to 285 (VAFAVVPVFGFANAGVSLSGI), 298 to 318 (VALGLLIGKQVGIFALAALAI), 336 to 356 (GVAALCGIGFTMSLFIGALAF), and 365 to 385 (EVKVGVLIGSVLSALLGVVVL).

The protein belongs to the NhaA Na(+)/H(+) (TC 2.A.33) antiporter family.

Its subcellular location is the cell inner membrane. It carries out the reaction Na(+)(in) + 2 H(+)(out) = Na(+)(out) + 2 H(+)(in). Functionally, na(+)/H(+) antiporter that extrudes sodium in exchange for external protons. In Pseudomonas savastanoi pv. phaseolicola (strain 1448A / Race 6) (Pseudomonas syringae pv. phaseolicola (strain 1448A / Race 6)), this protein is Na(+)/H(+) antiporter NhaA 2.